We begin with the raw amino-acid sequence, 320 residues long: tRNA pseudouridine synthase B (320 aa).

The active-site Nucleophile is Asp-48.

The protein belongs to the pseudouridine synthase TruB family. Type 1 subfamily.

It catalyses the reaction uridine(55) in tRNA = pseudouridine(55) in tRNA. Functionally, responsible for synthesis of pseudouridine from uracil-55 in the psi GC loop of transfer RNAs. The polypeptide is tRNA pseudouridine synthase B (Mycobacterium leprae (strain TN)).